The chain runs to 388 residues: Proteasomal ubiquitin receptor ADRM1 homolog rpn1302 (388 aa).

Positions 15–132 constitute a Pru domain; the sequence is RGKYGLVSVK…SLINQLIADP (118 aa). Disordered stretches follow at residues 202-227 and 368-388; these read RASSESNLNGPHATAGENGEDHEEAT and SDGEVEEEGDVEMRESNEKDE. Residues 368 to 377 show a composition bias toward acidic residues; the sequence is SDGEVEEEGD. Basic and acidic residues predominate over residues 378–388; it reads VEMRESNEKDE.

This sequence belongs to the ADRM1 family. In terms of assembly, component of the 19S proteasome regulatory particle complex. The 2 S.pombe rpn13 homologs, rpn1301 and rpn1302 are present at a 0.2-1 ratio.

It is found in the cytoplasm. It localises to the nucleus. Component of the 26S proteasome, a multiprotein complex involved in the ATP-dependent degradation of ubiquitinated proteins. This complex plays a key role in the maintenance of protein homeostasis by removing misfolded or damaged proteins, which could impair cellular functions, and by removing proteins whose functions are no longer required. Therefore, the proteasome participates in numerous cellular processes, including cell cycle progression, apoptosis, or DNA damage repair. Within the complex, functions as a proteasomal ubiquitin receptor. The polypeptide is Proteasomal ubiquitin receptor ADRM1 homolog rpn1302 (rpn1302) (Schizosaccharomyces pombe (strain 972 / ATCC 24843) (Fission yeast)).